Here is a 507-residue protein sequence, read N- to C-terminus: Eukaryotic translation initiation factor 4E-binding protein Mextli homolog (507 aa).

Residues 126-163 form a disordered region; that stretch reads RPEGQHDPAPTVGIPPSATSPPTQVTSSVTSPVPSSPQ. Positions 140-158 are enriched in low complexity; sequence PPSATSPPTQVTSSVTSPV. The region spanning 242–307 is the KH domain; sequence QLRHEMIIRN…EDIERAKDMI (66 aa). 2 disordered regions span residues 314–360 and 395–424; these read NMSP…DEDI and ARPS…QQEP. Residues 329–348 show a composition bias toward polar residues; that stretch reads QYSGMSSENQSIPSQQNTAN. Residues 349-360 show a composition bias toward acidic residues; it reads IDEDDDDDDEDI.

In terms of assembly, interacts with eukaryotic translation initiation factor ife-3.

The protein resides in the cytoplasm. Functionally, plays a role in promoting translation. The sequence is that of Eukaryotic translation initiation factor 4E-binding protein Mextli homolog from Caenorhabditis elegans.